Here is a 176-residue protein sequence, read N- to C-terminus: Large ribosomal subunit protein uL6 (176 aa).

Residues 151 to 170 show a composition bias toward basic and acidic residues; that stretch reads RPPEPYKGKGVRYADEQVRR. Residues 151-176 form a disordered region; the sequence is RPPEPYKGKGVRYADEQVRRKEAKKK.

The protein belongs to the universal ribosomal protein uL6 family. Part of the 50S ribosomal subunit.

Its function is as follows. This protein binds to the 23S rRNA, and is important in its secondary structure. It is located near the subunit interface in the base of the L7/L12 stalk, and near the tRNA binding site of the peptidyltransferase center. The chain is Large ribosomal subunit protein uL6 from Shewanella loihica (strain ATCC BAA-1088 / PV-4).